Reading from the N-terminus, the 79-residue chain is UPF0401 protein YkfF (79 aa).

It belongs to the UPF0401 family.

The sequence is that of UPF0401 protein YkfF (ykfF) from Escherichia coli (strain K12).